The sequence spans 92 residues: uncharacterized protein (92 aa).

The HMA domain maps to 24-89; the sequence is KQIVLKVKEM…AIHKLKYTAE (66 aa). Positions 35 and 38 each coordinate a metal cation.

This is an uncharacterized protein from Haemophilus influenzae (strain ATCC 51907 / DSM 11121 / KW20 / Rd).